A 141-amino-acid chain; its full sequence is MQLTSFTDYGLRALIYMASLPDGQMTSISQVTEVYGVSRNHMVKIINQLSRVGLVTAVRGKNGGIRLGKPADQILIGDVVRQMEPLTLVNCSSDFCHITPACRLKQVLNQAVQSFLKELDNYTLADMVKDNSPLYKLLLVE.

An HTH rrf2-type domain is found at 2-129 (QLTSFTDYGL…DNYTLADMVK (128 aa)). A DNA-binding region (H-T-H motif) is located at residues 28 to 51 (ISQVTEVYGVSRNHMVKIINQLSR). [2Fe-2S] cluster contacts are provided by Cys91, Cys96, and Cys102.

[2Fe-2S] cluster serves as cofactor.

In terms of biological role, nitric oxide-sensitive repressor of genes involved in protecting the cell against nitrosative stress. May require iron for activity. In Yersinia pseudotuberculosis serotype O:1b (strain IP 31758), this protein is HTH-type transcriptional repressor NsrR.